Here is an 869-residue protein sequence, read N- to C-terminus: Valine--tRNA ligase (869 aa).

The 'HIGH' region motif lies at P47–N57. The short motif at K521–S525 is the 'KMSKS' region element. K524 provides a ligand contact to ATP.

The protein belongs to the class-I aminoacyl-tRNA synthetase family. ValS type 2 subfamily.

Its subcellular location is the cytoplasm. The catalysed reaction is tRNA(Val) + L-valine + ATP = L-valyl-tRNA(Val) + AMP + diphosphate. Catalyzes the attachment of valine to tRNA(Val). As ValRS can inadvertently accommodate and process structurally similar amino acids such as threonine, to avoid such errors, it has a 'posttransfer' editing activity that hydrolyzes mischarged Thr-tRNA(Val) in a tRNA-dependent manner. The chain is Valine--tRNA ligase from Methanosarcina acetivorans (strain ATCC 35395 / DSM 2834 / JCM 12185 / C2A).